The following is a 181-amino-acid chain: MINSGIAKRYARAFFDIAGEDKLYEKYYEELSGFARIVQGDRNLKEFLANPVFNQAEKKAVVEAIIQKIRMSDMTTNFLKLLVDKKRIGMLAEIADYYRVLMDEVLKRVRVSVKTAFPLPADVTSDIKQGLEQMTGKQTEIVVEEDRSLLGGIVIRVGDTLYDGSIKTQLSNIRNLLGEAV.

This sequence belongs to the ATPase delta chain family. F-type ATPases have 2 components, F(1) - the catalytic core - and F(0) - the membrane proton channel. F(1) has five subunits: alpha(3), beta(3), gamma(1), delta(1), epsilon(1). F(0) has three main subunits: a(1), b(2) and c(10-14). The alpha and beta chains form an alternating ring which encloses part of the gamma chain. F(1) is attached to F(0) by a central stalk formed by the gamma and epsilon chains, while a peripheral stalk is formed by the delta and b chains.

It localises to the cell inner membrane. In terms of biological role, f(1)F(0) ATP synthase produces ATP from ADP in the presence of a proton or sodium gradient. F-type ATPases consist of two structural domains, F(1) containing the extramembraneous catalytic core and F(0) containing the membrane proton channel, linked together by a central stalk and a peripheral stalk. During catalysis, ATP synthesis in the catalytic domain of F(1) is coupled via a rotary mechanism of the central stalk subunits to proton translocation. This protein is part of the stalk that links CF(0) to CF(1). It either transmits conformational changes from CF(0) to CF(1) or is implicated in proton conduction. In Syntrophus aciditrophicus (strain SB), this protein is ATP synthase subunit delta.